The following is a 477-amino-acid chain: Ribulose bisphosphate carboxylase large chain (477 aa).

A propeptide spanning residues 1–2 is cleaved from the precursor; the sequence is MS. Pro-3 is subject to N-acetylproline. An N6,N6,N6-trimethyllysine modification is found at Lys-14. Residues Asn-123 and Thr-173 each coordinate substrate. The active-site Proton acceptor is the Lys-175. Lys-177 contacts substrate. Positions 201, 203, and 204 each coordinate Mg(2+). Lys-201 bears the N6-carboxylysine mark. The active-site Proton acceptor is the His-294. Arg-295, His-327, and Ser-379 together coordinate substrate.

The protein belongs to the RuBisCO large chain family. Type I subfamily. As to quaternary structure, heterohexadecamer of 8 large chains and 8 small chains; disulfide-linked. The disulfide link is formed within the large subunit homodimers. Mg(2+) is required as a cofactor. The disulfide bond which can form in the large chain dimeric partners within the hexadecamer appears to be associated with oxidative stress and protein turnover.

The protein localises to the plastid. Its subcellular location is the chloroplast. The enzyme catalyses 2 (2R)-3-phosphoglycerate + 2 H(+) = D-ribulose 1,5-bisphosphate + CO2 + H2O. The catalysed reaction is D-ribulose 1,5-bisphosphate + O2 = 2-phosphoglycolate + (2R)-3-phosphoglycerate + 2 H(+). RuBisCO catalyzes two reactions: the carboxylation of D-ribulose 1,5-bisphosphate, the primary event in carbon dioxide fixation, as well as the oxidative fragmentation of the pentose substrate in the photorespiration process. Both reactions occur simultaneously and in competition at the same active site. This is Ribulose bisphosphate carboxylase large chain from Nicotiana tomentosiformis (Tobacco).